The chain runs to 60 residues: Large ribosomal subunit protein uL30 (60 aa).

The protein belongs to the universal ribosomal protein uL30 family. Part of the 50S ribosomal subunit.

The polypeptide is Large ribosomal subunit protein uL30 (Christiangramia forsetii (strain DSM 17595 / CGMCC 1.15422 / KT0803) (Gramella forsetii)).